The sequence spans 949 residues: Thrombospondin-4-B (949 aa).

The signal sequence occupies residues 1–22 (MAGTMHLLTAVSLILMLSSANA). The region spanning 23 to 198 (ESTVYNLLTS…LEELKLAYGD (176 aa)) is the Laminin G-like domain. 21 disulfides stabilise this stretch: Cys276/Cys287, Cys281/Cys296, Cys299/Cys310, Cys316/Cys327, Cys321/Cys336, Cys339/Cys363, Cys369/Cys383, Cys377/Cys392, Cys395/Cys407, Cys413/Cys427, Cys421/Cys437, Cys439/Cys450, Cys466/Cys471, Cys476/Cys496, Cys512/Cys532, Cys535/Cys555, Cys571/Cys591, Cys594/Cys614, Cys632/Cys652, Cys672/Cys692, and Cys708/Cys929. Residues 312–349 (DVDECQFNPCFPGVRCVNMAPGFRCEACPLGFTGKPLE) enclose the EGF-like 1; calcium-binding domain. The EGF-like 2; calcium-binding domain occupies 365–408 (DIDECKGPDNGGCTANSICVNSVGSYQCGRCKTGFTGDQIRGCK). An EGF-like 3 domain is found at 409–451 (PEKSCGNRLQNPCDPNAQCTEERDGTITCQCGIGWAGNGYLCG). TSP type-3 repeat units lie at residues 452 to 484 (KDTDIDGYPDERLRCRDPTCRKDNCVTVPNSGQ), 485 to 520 (EDADGDGKGDACDPDADGDGILNEQDNCWLTPNINQ), 521 to 543 (QNSDKDSHGDACDNCVRVDNPDQ), 544 to 579 (RDTDSDGLGDACDDDMDGDGLKNFLDNCQRVKNRDQ), 580 to 602 (LDRDGDGVGDACDSCPDIPNPNQ), 603 to 640 (SDIDNDLVGDSCDTNQDSDGDGHQDSKDNCPMVINSSQ), 641 to 680 (LDTDKDGIGDECDDDDDNDGIPDSLPPGPDNCRLVPNPEQ), and 681 to 716 (IDDNNDGVGDICESDFDQDKVIDRIDNCPENAEITL). The segment at 578-671 (DQLDRDGDGV…PDSLPPGPDN (94 aa)) is disordered. Asn601 and Asn637 each carry an N-linked (GlcNAc...) asparagine glycan. The segment covering 649–660 (GDECDDDDDNDG) has biased composition (acidic residues). Residues 720 to 934 (RAYQTVVLDP…LKYRCNDTIP (215 aa)) enclose the TSP C-terminal domain. Asn930 carries N-linked (GlcNAc...) asparagine glycosylation.

The protein belongs to the thrombospondin family. Homotrimer; disulfide-linked.

It localises to the endoplasmic reticulum. Its subcellular location is the sarcoplasmic reticulum. The protein localises to the secreted. It is found in the extracellular space. The protein resides in the extracellular matrix. In terms of biological role, adhesive glycoprotein that mediates cell-to-cell and cell-to-matrix interactions and may be involved in various processes including cellular proliferation, migration, adhesion and attachment. May play a role in ER stress response. This Danio rerio (Zebrafish) protein is Thrombospondin-4-B (thbs4b).